The primary structure comprises 458 residues: (R)-6-hydroxynicotine oxidase (458 aa).

In terms of domain architecture, FAD-binding PCMH-type spans 33–204 (RHLQRPSLIA…TEVEVQLYEL (172 aa)). FAD-binding positions include 67-73 (RSGGHNP), 129-130 (HP), 134-137 (FCGL), glycine 144, threonine 195, asparagine 413, and asparagine 450. Position 71 is a pros-8alpha-FAD histidine (histidine 71).

Belongs to the oxygen-dependent FAD-linked oxidoreductase family. In terms of assembly, monomer. FAD is required as a cofactor.

It localises to the cytoplasm. It catalyses the reaction (R)-6-hydroxynicotine + O2 + H2O = 6-hydroxypseudooxynicotine + H2O2. The catalysed reaction is (R)-6-hydroxynicotine + O2 = 6-hydroxy-N-methylmyosmine + H2O2. Its pathway is alkaloid degradation; nicotine degradation; 6-hydroxypseudooxynicotine from nicotine (R-isomer route): step 2/2. Its activity is regulated as follows. Inhibited by (S)-6-hydroxynicotine. Inhibited by high concentrations of phenanthroline. In terms of biological role, involved in the degradation of D-nicotine. Catalyzes the oxidation of (R)-6-hydroxynicotine (6-hydroxy-D-nicotine) to 6-hydroxypseudooxynicotine. Oxidation of the pyrrolidine ring of (R)-6-hydroxynicotine leads to the formation of the optically inactive 6-hydroxy-N-methylmyosmine, which hydrolyzes spontaneously to 6-hydroxypseudooxynicotine. Acts with absolute stereospecificity on the D-form of 6-hydroxynicotine. Shows lower activity with (R)-6-hydroxynornicotine, and weak activity with (R)-4-(1-methylpyrrolidine-2-yl)phenol, (R)-6-chloronicotine and (R)-nicotine. In Paenarthrobacter nicotinovorans (Arthrobacter nicotinovorans), this protein is (R)-6-hydroxynicotine oxidase.